The primary structure comprises 64 residues: Putative neurotoxin-G (64 aa).

Positions 1 to 19 are cleaved as a signal peptide; that stretch reads MFAMVTVTVLLLISSGIFC. Cystine bridges form between Cys-25–Cys-45, Cys-32–Cys-54, and Cys-36–Cys-56.

In terms of tissue distribution, expressed by the venom gland.

Its subcellular location is the secreted. This chain is Putative neurotoxin-G, found in Lychas mucronatus (Chinese swimming scorpion).